Here is a 701-residue protein sequence, read N- to C-terminus: MARTTPISLYRNIGISAHIDAGKTTTTERILFYTGVSHKIGEVHDGAATMDWMEQEQERGITITSAATTAFWSGMSQQYQQHRINVIDTPGHVDFTIEVERSMRVLDGAVMVYCAVGGVQPQSETVWRQANKYGVPRIAFVNKMDRTGANFLRVVEQIKTRLGGNVVALQLPIGAEDNFTGIVDLVKMKAINWNEADQGMTFTYEDIPAEMLSECEERRAMLVEAAAEASEELMEKFFEAGDLSEEEIKTALRQRVLAGEIIPVCCGSAFKNKGVQAMLDAVIDYLPAPTDIPAIKGINEDESEGERHASDEEPFAALAFKIATDPFVGNLTFFRVYSGVINSGDTVYNSVKQKRERFGRIVQMHANKREEIKEVRAGDIAAAIGLKEVGTGDTLCAQNAPIILERMEFPEPVISVAVEPKTKADQEKMGLALGRLAQEDPSFRVHTDEESGETIISGMGELHLDIIVDRMRREFKVEANIGKPQVSYRETIRTRVNDVEGKHAKQSGGRGQYGHVVIDLYPLDAEGPGYEFVNEIKGGVIPGEFIPAVDKGIQEQLKSGPLAGYPVEDIGVRLHFGSYHDVDSSELAFKLAASLAFKAAFAKANPVLLEPIMKVEVETPPDYVGDVIGDLSRRRAMVNGQEATEFVVKINAEVPLSEMFGYATDLRSQTQGRASYSMEPLKYSEAPTSVAAAIIEARKAK.

A tr-type G domain is found at 8–290 (SLYRNIGISA…AVIDYLPAPT (283 aa)). GTP is bound by residues 17-24 (AHIDAGKT), 88-92 (DTPGH), and 142-145 (NKMD).

This sequence belongs to the TRAFAC class translation factor GTPase superfamily. Classic translation factor GTPase family. EF-G/EF-2 subfamily.

It is found in the cytoplasm. Functionally, catalyzes the GTP-dependent ribosomal translocation step during translation elongation. During this step, the ribosome changes from the pre-translocational (PRE) to the post-translocational (POST) state as the newly formed A-site-bound peptidyl-tRNA and P-site-bound deacylated tRNA move to the P and E sites, respectively. Catalyzes the coordinated movement of the two tRNA molecules, the mRNA and conformational changes in the ribosome. The polypeptide is Elongation factor G (Haemophilus ducreyi (strain 35000HP / ATCC 700724)).